The following is a 232-amino-acid chain: MPVNFVAARKKRDGVNTHIELQKAIYKSRSFTEINNILDGILPDAHRETPFATYFEANLGCRRPDCMIVFDDLPKQIITCVLVEFKTTSRTAFDKRKKDAVQQYQLHQGEEQVRDAVKILSSITGRGCNLRVWGFLLFYQQSTLRVLHKTIPECAVTLTDRWAFSALLKKSKNESFHAFLQKSCTASTTGPQKELFGIHKPENSEVETVGATKSTRKGAEKSRLSRRSRKSN.

The interval 191 to 232 (PQKELFGIHKPENSEVETVGATKSTRKGAEKSRLSRRSRKSN) is disordered.

The protein belongs to the herpesviridae UL24 family.

It is found in the virion. The protein resides in the host cytoplasm. It localises to the host nucleus. Its subcellular location is the host nucleolus. The protein localises to the host Golgi apparatus. In terms of biological role, may participate in nuclear egress of viral particles. Plays a role in the dispersal of several host nucleolar proteins including NCL/nucleolin and NPM1. Since deletion of host NCL/nucleolin negatively impact on nuclear egress, UL24 supposedly acts on this process through its effect on host nucleoli. In Elephas maximus (Indian elephant), this protein is Protein UL24 homolog.